The sequence spans 231 residues: Allergen Ani s 10 (231 aa).

Positions 1–19 (MHLITALVLLLQLIHFITS) are cleaved as a signal peptide. Tandem repeats lie at residues 28–56 (GGPG…QQNI), 57–85 (GGPG…QENI), 86–114 (GGPG…QQSI), 115–143 (EGPG…QQSI), 144–172 (EGPG…QQNI), 173–201 (GGPG…QQNI), and 204–231 (GGPG…SMQA). Residues 28–201 (GGPGPVVGGS…NEQAAEQQNI (174 aa)) form a 6 X 29 AA tandem repeats of [EG]-G-P-G-P-V-[IV]-[SG]-G-S-G-I-G-[ND]-V-W-[NE]-K-A-N-E-[QP]-A-[AE]-[QEH]-Q-[EQ]-[NS]-I region. Disordered regions lie at residues 107 to 126 (QAAH…GSGI) and 134 to 231 (NEQA…SMQA). 3 stretches are compositionally biased toward low complexity: residues 114-123 (IEGPGPVVSG), 143-152 (IEGPGPVVSG), and 177-187 (PVISGSGIGNV).

This is Allergen Ani s 10 from Anisakis simplex (Herring worm).